The primary structure comprises 313 residues: Probable cell division protein WhiA (313 aa).

A DNA-binding region (H-T-H motif) is located at residues 278–311 (SLKELGKLLDPPLSKSGVNHRLRRIKSIANEIRG).

The protein belongs to the WhiA family.

In terms of biological role, involved in cell division and chromosome segregation. This chain is Probable cell division protein WhiA, found in Halothermothrix orenii (strain H 168 / OCM 544 / DSM 9562).